Here is a 345-residue protein sequence, read N- to C-terminus: MSTPTPLSYKDAGVDIDAGNALVNNIKSAVKRTHRPEVMGNLGGFGALCELPTKYKHPVLVSGTDGVGTKLRLAIDYKKHDTVGIDLVAMCVNDLIVQGAEPLFFLDYYATGKLDVDTATSVVNGIGEGCFQSGCALIGGETAEMPGMYEGEDYDLAGFCVGVVEKADIIDGTKVSAGDALIALASSGPHSNGYSLIRKVLEVSKADPQQDLNGKQLIEHLLEPTKIYVKSVLKLIEESDVHAMAHITGGGFWENIPRVLPANAKAVIDGASWQWPVVFDWLKTNGNISQHEMYRTFNCGVGMIIALPADKVDAALSLLEAAGEQAWLIGSIASREGEEEQVEIV.

It belongs to the AIR synthase family.

It is found in the cytoplasm. It catalyses the reaction 2-formamido-N(1)-(5-O-phospho-beta-D-ribosyl)acetamidine + ATP = 5-amino-1-(5-phospho-beta-D-ribosyl)imidazole + ADP + phosphate + H(+). It participates in purine metabolism; IMP biosynthesis via de novo pathway; 5-amino-1-(5-phospho-D-ribosyl)imidazole from N(2)-formyl-N(1)-(5-phospho-D-ribosyl)glycinamide: step 2/2. The chain is Phosphoribosylformylglycinamidine cyclo-ligase from Shewanella denitrificans (strain OS217 / ATCC BAA-1090 / DSM 15013).